We begin with the raw amino-acid sequence, 214 residues long: Ubiquitin-conjugating enzyme E2 21 (214 aa).

A UBC core domain is found at alanine 21–asparagine 168. The active-site Glycyl thioester intermediate is the cysteine 106. One can recognise a UBA domain in the interval aspartate 172–aspartate 214.

The protein belongs to the ubiquitin-conjugating enzyme family.

The enzyme catalyses S-ubiquitinyl-[E1 ubiquitin-activating enzyme]-L-cysteine + [E2 ubiquitin-conjugating enzyme]-L-cysteine = [E1 ubiquitin-activating enzyme]-L-cysteine + S-ubiquitinyl-[E2 ubiquitin-conjugating enzyme]-L-cysteine.. It functions in the pathway protein modification; protein ubiquitination. In terms of biological role, acts with E3 ubiquitin-protein ligase trim-21 to catalyze the 'Lys-48'-linked polyubiquitination of ced-1, promoting its proteasomal degradation to maintain appropriate ced-1 levels for apoptotic cell clearance. The chain is Ubiquitin-conjugating enzyme E2 21 (ubc-21) from Caenorhabditis elegans.